We begin with the raw amino-acid sequence, 301 residues long: HTH-type transcriptional regulator EstR (301 aa).

One can recognise an HTH lysR-type domain in the interval 5–62; it reads PSLRQLSYLVTLSETLHFTEAARRSFVTQSTLSGGIMELERLLGGVLVERDRQNVRLT. Positions 22-41 form a DNA-binding region, H-T-H motif; that stretch reads FTEAARRSFVTQSTLSGGIM.

This sequence belongs to the LysR transcriptional regulatory family.

Its function is as follows. Transcriptional regulator of the esterase operon. This is HTH-type transcriptional regulator EstR (estR) from Acinetobacter baylyi (strain ATCC 33305 / BD413 / ADP1).